A 305-amino-acid chain; its full sequence is Homoserine O-succinyltransferase (305 aa).

The active-site Acyl-thioester intermediate is the C142. Substrate-binding residues include K163 and S192. H235 acts as the Proton acceptor in catalysis. The active site involves E237. R249 lines the substrate pocket.

It belongs to the MetA family.

It is found in the cytoplasm. It carries out the reaction L-homoserine + succinyl-CoA = O-succinyl-L-homoserine + CoA. It participates in amino-acid biosynthesis; L-methionine biosynthesis via de novo pathway; O-succinyl-L-homoserine from L-homoserine: step 1/1. Functionally, transfers a succinyl group from succinyl-CoA to L-homoserine, forming succinyl-L-homoserine. This Psychromonas ingrahamii (strain DSM 17664 / CCUG 51855 / 37) protein is Homoserine O-succinyltransferase.